The primary structure comprises 346 residues: MIREALQKLVGGEDLEQHEAEAVMAEIMDGEATSAQIGALLAGLRLKKETAAEIRGFARAMRARAEQVPTRHELVADTCGTGGDGAQTFNISTTAAFVVAGAGVPVAKHGNTAVSSRCGSADVLRHLGVNLDLTPAQMGACLDEVGIAFLFAPRLHRAMQHAAGPRKELGIRTVFNILGPLTNPVRPRVQVLGVFDAAVAELVADALAGLEVERAFVIHGAGRLDEVSLAGPAQVWEVRPGSVRAGILDPVDLGFERADVESLSGGSPADNARITLEILHGASGPRRDAVLLNAGLALLAAGRAGDAAGAVRLAAESLDSGAARERLTRLIEFTERCKHVEHDNRL.

Residues glycine 80, 83–84, threonine 88, 90–93, 108–116, and serine 120 each bind 5-phospho-alpha-D-ribose 1-diphosphate; these read GD, NIST, and KHGNTAVSS. Glycine 80 serves as a coordination point for anthranilate. Residue serine 92 participates in Mg(2+) binding. Anthranilate is bound at residue asparagine 111. Arginine 166 provides a ligand contact to anthranilate. Positions 225 and 226 each coordinate Mg(2+).

Belongs to the anthranilate phosphoribosyltransferase family. As to quaternary structure, homodimer. The cofactor is Mg(2+).

The enzyme catalyses N-(5-phospho-beta-D-ribosyl)anthranilate + diphosphate = 5-phospho-alpha-D-ribose 1-diphosphate + anthranilate. The protein operates within amino-acid biosynthesis; L-tryptophan biosynthesis; L-tryptophan from chorismate: step 2/5. In terms of biological role, catalyzes the transfer of the phosphoribosyl group of 5-phosphorylribose-1-pyrophosphate (PRPP) to anthranilate to yield N-(5'-phosphoribosyl)-anthranilate (PRA). The sequence is that of Anthranilate phosphoribosyltransferase from Desulforudis audaxviator (strain MP104C).